The following is a 407-amino-acid chain: Tyrosine--tRNA ligase (407 aa).

An L-tyrosine-binding site is contributed by Y35. Positions 40–49 (PTADSLHVGH) match the 'HIGH' region motif. L-tyrosine-binding residues include Y168 and Q172. Positions 228–232 (KMGKT) match the 'KMSKS' region motif. K231 is an ATP binding site. Residues 341-405 (NLLVDLLVKC…RGKKNFNRIV (65 aa)) enclose the S4 RNA-binding domain.

Belongs to the class-I aminoacyl-tRNA synthetase family. TyrS type 1 subfamily. In terms of assembly, homodimer.

It is found in the cytoplasm. The catalysed reaction is tRNA(Tyr) + L-tyrosine + ATP = L-tyrosyl-tRNA(Tyr) + AMP + diphosphate + H(+). Functionally, catalyzes the attachment of tyrosine to tRNA(Tyr) in a two-step reaction: tyrosine is first activated by ATP to form Tyr-AMP and then transferred to the acceptor end of tRNA(Tyr). The protein is Tyrosine--tRNA ligase of Clostridium botulinum (strain ATCC 19397 / Type A).